The sequence spans 153 residues: Aspartate carbamoyltransferase regulatory chain (153 aa).

Residues C109, C114, C138, and C141 each contribute to the Zn(2+) site.

This sequence belongs to the PyrI family. As to quaternary structure, contains catalytic and regulatory chains. Requires Zn(2+) as cofactor.

Involved in allosteric regulation of aspartate carbamoyltransferase. This Salmonella schwarzengrund (strain CVM19633) protein is Aspartate carbamoyltransferase regulatory chain.